We begin with the raw amino-acid sequence, 508 residues long: MTWRQTEPGIFVKDFDGAEKVYYKIFTSFKPLNREHWGIYAICTVNFGPSLNTDRVAILRSAWKALRITFPGLSLVPINVAKLYKVSDAQSVEEWAGQTFFVDAEKTPEEVIASAKPRDLPSLYYLPASSSVVFLSSHWRIDALGTCMLLDRFFSILEQPSLVEATPAPDERGKISPSLEDAAGSPRTSTEEMEKFAGEYIANFHKKAVQTSGFPFKGGPNTLPSNPAQEAVMFSPSSTKSLLAACKDRRISVTAAIHAALAETVFVLGMSESQAADFTTVMAVNLRPYLQPPYNSRDHACQTYVGSITPQVLRSKNFLERTASLMESYQGWYDGKLIKALRPIFKYHADALFAQRAPPPNPPSGVTLNSLGVIEKYFRSDYENGLKVERFHFGVTMMTRQTMLYAWTFRGQLTLSLNFNEAYYDGDVAKKILLHIKRVLEKELSVELDPVVEILPAKQMEHELSTKHRVVYLMIPRKVDDADNGFEGAILPGSAKPAVAGGEDANPL.

The segment at 166-188 (TPAPDERGKISPSLEDAAGSPRT) is disordered.

It participates in secondary metabolite biosynthesis. O-acetyltransferase; part of the gene cluster that mediates the biosynthesis of azaphilone pigments (MonAzPs), a complex mixture of compounds with a common azaphilone skeleton very widely used as food colorants. PigM and pigO are involved in the elimination of the omega-1 alcohol with pigM acting as an O-acetyltransferase that synthesizes the O-11 acetyl intermediate whereas pigO eliminates acetic acid to yield an intermediate with a C10(11) double bond. The first step of the pathway is performed by the nrPKS pigA that forms the hexaketide precursor from successive condensations of five malonyl-CoA units, with a simple acetyl-CoA starter unit. The role of esterase pigG is not clear, but it may play at most a supplementary role in the formation of the benzaldehyde produced by the pigA nrPKS. This very reactive benzaldehyde is intercepted by the pigC ketoreductase that to provide the first stable enzyme-free MonAzPs intermediate, 6-(4-hydroxy-2-oxopentyl)-3-methyl-2,4-dioxocyclohexane carbaldehyde, also known as M7PKS-1. The FAD-dependent monooxygenase pigN hydroxylates M7PKS-1 at C-4, which triggers the formation of the pyran ring. PigJ, pigK and pigD are involved in the acetylation of the pyran ring. PigJ and pigK form the two subunits of a dedicated fungal FAS that produces the side chain fatty acyl moiety of MonAzPs and pigD transfers the fatty acyl chain to the C-4 alcohol. PigM and pigO are involved in the elimination of the omega-1 alcohol. PigM acts as an O-acetyltransferase that synthesizes the putative O-11 acetyl intermediate whereas pigO eliminates acetic acid to yield an intermediate with a C10(11) double bond. The dehydration of the C-11 alcohol followed by the reduction of the C6(7) double bond by the NAD(P)H-dependent oxidoreductase pigE increases the electrophilicity of the C-5 ketone of the resulting acyl benzopyran. This in turn sets up the C-5 ketone for an intramolecular Knoevenagel aldol condensation with the C-20 enol of the side chain. This condensation affords the characteristic linear tricyclic carbon skeletons of the yellow pigments that serve as the common precursors for the classical yellow pigments monascin and ankaflavin, orange pigments rubopunctatin and monascorubrin, and red pigments ribropunctamine and monascorubramine. The FAD-dependent oxidoreductase pigF is especially invoved in the biosynthesis of orange and red pigments via desaturation of C6(7). The polypeptide is O-acetyltransferase pigM (Monascus ruber (Mold)).